The chain runs to 290 residues: Phosphatidylglycerol--prolipoprotein diacylglyceryl transferase (290 aa).

7 helical membrane-spanning segments follow: residues 21 to 41 (VALH…MWLA), 60 to 80 (LLYA…VLFY), 96 to 116 (WDGG…MVIF), 124 to 144 (FFQV…AGRL), 198 to 218 (SQLY…NLFI), 225 to 245 (GSVS…VEFF), and 260 to 280 (ISMG…MMIW). Arg-143 is a binding site for a 1,2-diacyl-sn-glycero-3-phospho-(1'-sn-glycerol).

This sequence belongs to the Lgt family.

It is found in the cell inner membrane. The enzyme catalyses L-cysteinyl-[prolipoprotein] + a 1,2-diacyl-sn-glycero-3-phospho-(1'-sn-glycerol) = an S-1,2-diacyl-sn-glyceryl-L-cysteinyl-[prolipoprotein] + sn-glycerol 1-phosphate + H(+). It participates in protein modification; lipoprotein biosynthesis (diacylglyceryl transfer). Catalyzes the transfer of the diacylglyceryl group from phosphatidylglycerol to the sulfhydryl group of the N-terminal cysteine of a prolipoprotein, the first step in the formation of mature lipoproteins. This chain is Phosphatidylglycerol--prolipoprotein diacylglyceryl transferase, found in Enterobacter sp. (strain 638).